The following is a 175-amino-acid chain: NADH-ubiquinone oxidoreductase chain 6 (175 aa).

Helical transmembrane passes span 1–21 (MMYI…GFSS), 25–45 (PVYG…IIMG), 51–71 (LGLV…GYTI), 87–107 (VVLG…MWLF), 112–132 (ELVG…EGGF), and 148–168 (YGFW…FIAI).

This sequence belongs to the complex I subunit 6 family. Core subunit of respiratory chain NADH dehydrogenase (Complex I) which is composed of 45 different subunits.

The protein resides in the mitochondrion inner membrane. The catalysed reaction is a ubiquinone + NADH + 5 H(+)(in) = a ubiquinol + NAD(+) + 4 H(+)(out). Its function is as follows. Core subunit of the mitochondrial membrane respiratory chain NADH dehydrogenase (Complex I) which catalyzes electron transfer from NADH through the respiratory chain, using ubiquinone as an electron acceptor. Essential for the catalytic activity and assembly of complex I. The chain is NADH-ubiquinone oxidoreductase chain 6 (MT-ND6) from Loxodonta africana (African elephant).